The chain runs to 191 residues: Transcription factor HES-2 (191 aa).

Residues 1–26 form a disordered region; sequence MAPNVALADSMHNYQPKPGKRNQEAS. The bHLH domain occupies 28–85; sequence LRKTLKPLMEKRRRARINESLNQLKTLILPLIGKDNSRYSKLEKADILEMTVRFLRDI. In terms of domain architecture, Orange spans 97–130; sequence YKEGYRACVERLSAILGKSHVLTGEASNRLLEYL. 2 stretches are compositionally biased toward polar residues: residues 159-173 and 182-191; these read RTSQFGSPLQNQPSS and QLNSSIWRPW. The interval 159 to 191 is disordered; sequence RTSQFGSPLQNQPSSHRPAPCPPQLNSSIWRPW. The WRPW motif signature appears at 188–191; sequence WRPW.

As to quaternary structure, transcription repression requires formation of a complex with a corepressor protein of the Groucho/TLE family. Homodimer, and heterodimer with the other bHLH proteins neurod1, neurod4/ath3, hes1/hairy1 and hes6r. Weakly interacts with the bHLH protein hey1/hrt1. Expressed in the animal half of the early cleavage stage embryo. During neurulation and organogenesis, the otic vesicles and retina are the main sites of expression; expression in otic placodes begins as early as stage 13.5, persisting in the otic vesicles at stage 30 and beyond. Also transiently expressed in the olfactory placodes. In addition, weakly expressed in primary neurons. Expression in the retina begins at stage 21, and is seen throughout the neural retina by stage 30. From stage 35 onwards, expression progressively declines in the central retina, while remaining high in the margins. At stage 41, expression becomes restricted to the ciliary marginal zone (CMZ) of the retina, the only region where retinogenesis is still occurring.

It is found in the nucleus. In terms of biological role, transcriptional repressor. Essential in the retina to govern glial versus neuronal differentiation. Promotes gliogenesis through the inhibition of neuronal differentiation by at least two distinct mechanisms; represses proneural gene transcription, and also physically interacts with proneural proteins, including neurod1. This chain is Transcription factor HES-2 (hes2), found in Xenopus laevis (African clawed frog).